Reading from the N-terminus, the 506-residue chain is Maturase K (506 aa).

It belongs to the intron maturase 2 family. MatK subfamily.

The protein resides in the plastid. Its subcellular location is the chloroplast. Usually encoded in the trnK tRNA gene intron. Probably assists in splicing its own and other chloroplast group II introns. This chain is Maturase K, found in Phyllodoce caerulea (Blue mountain heath).